The sequence spans 95 residues: Glutamyl-tRNA(Gln) amidotransferase subunit C 1 (95 aa).

This sequence belongs to the GatC family. As to quaternary structure, heterotrimer of A, B and C subunits.

The enzyme catalyses L-glutamyl-tRNA(Gln) + L-glutamine + ATP + H2O = L-glutaminyl-tRNA(Gln) + L-glutamate + ADP + phosphate + H(+). The catalysed reaction is L-aspartyl-tRNA(Asn) + L-glutamine + ATP + H2O = L-asparaginyl-tRNA(Asn) + L-glutamate + ADP + phosphate + 2 H(+). Functionally, allows the formation of correctly charged Asn-tRNA(Asn) or Gln-tRNA(Gln) through the transamidation of misacylated Asp-tRNA(Asn) or Glu-tRNA(Gln) in organisms which lack either or both of asparaginyl-tRNA or glutaminyl-tRNA synthetases. The reaction takes place in the presence of glutamine and ATP through an activated phospho-Asp-tRNA(Asn) or phospho-Glu-tRNA(Gln). The chain is Glutamyl-tRNA(Gln) amidotransferase subunit C 1 (gatC1) from Clostridium acetobutylicum (strain ATCC 824 / DSM 792 / JCM 1419 / IAM 19013 / LMG 5710 / NBRC 13948 / NRRL B-527 / VKM B-1787 / 2291 / W).